Reading from the N-terminus, the 674-residue chain is DNA ligase (674 aa).

Residues 34–38 (DFEFD), 83–84 (SL), and glutamate 117 contribute to the NAD(+) site. The active-site N6-AMP-lysine intermediate is the lysine 119. Residues arginine 140, glutamate 184, lysine 297, and lysine 321 each coordinate NAD(+). Residues cysteine 415, cysteine 418, cysteine 433, and cysteine 439 each contribute to the Zn(2+) site. Positions 598-674 (LVNTNFEGQS…IDEDEFERML (77 aa)) constitute a BRCT domain.

It belongs to the NAD-dependent DNA ligase family. LigA subfamily. It depends on Mg(2+) as a cofactor. The cofactor is Mn(2+).

It carries out the reaction NAD(+) + (deoxyribonucleotide)n-3'-hydroxyl + 5'-phospho-(deoxyribonucleotide)m = (deoxyribonucleotide)n+m + AMP + beta-nicotinamide D-nucleotide.. In terms of biological role, DNA ligase that catalyzes the formation of phosphodiester linkages between 5'-phosphoryl and 3'-hydroxyl groups in double-stranded DNA using NAD as a coenzyme and as the energy source for the reaction. It is essential for DNA replication and repair of damaged DNA. In Chlorobaculum parvum (strain DSM 263 / NCIMB 8327) (Chlorobium vibrioforme subsp. thiosulfatophilum), this protein is DNA ligase.